Consider the following 387-residue polypeptide: ATP phosphoribosyltransferase regulatory subunit (387 aa).

It belongs to the class-II aminoacyl-tRNA synthetase family. HisZ subfamily. As to quaternary structure, heteromultimer composed of HisG and HisZ subunits.

It is found in the cytoplasm. It functions in the pathway amino-acid biosynthesis; L-histidine biosynthesis; L-histidine from 5-phospho-alpha-D-ribose 1-diphosphate: step 1/9. Its function is as follows. Required for the first step of histidine biosynthesis. May allow the feedback regulation of ATP phosphoribosyltransferase activity by histidine. The polypeptide is ATP phosphoribosyltransferase regulatory subunit (Polynucleobacter necessarius subsp. necessarius (strain STIR1)).